The following is a 125-amino-acid chain: MATINQLVRKPRKRKVEKSAVPALQACPQRRGVCTRVYTTTPKKPNSALRKVARVRLTNGYEVSSYIGGEGHNLQEHSVVLIRGGRVKDLPGVRYHTVRGSLDTQGVQNRKQARSKYGAKRPKKA.

At aspartate 89 the chain carries 3-methylthioaspartic acid. Positions 100 to 125 are disordered; that stretch reads GSLDTQGVQNRKQARSKYGAKRPKKA. The span at 111–125 shows a compositional bias: basic residues; that stretch reads KQARSKYGAKRPKKA.

The protein belongs to the universal ribosomal protein uS12 family. In terms of assembly, part of the 30S ribosomal subunit. Contacts proteins S8 and S17. May interact with IF1 in the 30S initiation complex.

Functionally, with S4 and S5 plays an important role in translational accuracy. Its function is as follows. Interacts with and stabilizes bases of the 16S rRNA that are involved in tRNA selection in the A site and with the mRNA backbone. Located at the interface of the 30S and 50S subunits, it traverses the body of the 30S subunit contacting proteins on the other side and probably holding the rRNA structure together. The combined cluster of proteins S8, S12 and S17 appears to hold together the shoulder and platform of the 30S subunit. In Thioalkalivibrio sulfidiphilus (strain HL-EbGR7), this protein is Small ribosomal subunit protein uS12.